The sequence spans 603 residues: Elongation factor 4 (603 aa).

Residues 7 to 191 (DNIRNFSIVA…AIVTRLPPPK (185 aa)) form the tr-type G domain. Residues 19 to 24 (DHGKST) and 138 to 141 (NKVD) contribute to the GTP site.

This sequence belongs to the TRAFAC class translation factor GTPase superfamily. Classic translation factor GTPase family. LepA subfamily.

Its subcellular location is the cell inner membrane. The catalysed reaction is GTP + H2O = GDP + phosphate + H(+). Required for accurate and efficient protein synthesis under certain stress conditions. May act as a fidelity factor of the translation reaction, by catalyzing a one-codon backward translocation of tRNAs on improperly translocated ribosomes. Back-translocation proceeds from a post-translocation (POST) complex to a pre-translocation (PRE) complex, thus giving elongation factor G a second chance to translocate the tRNAs correctly. Binds to ribosomes in a GTP-dependent manner. The sequence is that of Elongation factor 4 from Rhodopseudomonas palustris (strain ATCC BAA-98 / CGA009).